Here is a 34-residue protein sequence, read N- to C-terminus: Peptidoglycan hydrolase P7 (34 aa).

A helical transmembrane segment spans residues 10 to 26; it reads VLITLGVLAAVNKVSAL.

The protein resides in the virion membrane. In terms of biological role, exolysin that catalyzes the cleavage of the host peptidoglycans during virus entry. The chain is Peptidoglycan hydrolase P7 (VII) from Pseudoalteromonas espejiana (Bacteriophage PM2).